Reading from the N-terminus, the 321-residue chain is Ras association domain-containing protein 4 (321 aa).

The disordered stretch occupies residues 79 to 159; sequence HLPSTSWMPR…RPKCRAPGEA (81 aa). The span at 98–110 shows a compositional bias: polar residues; that stretch reads SPQNGNITAQGPS. A Phosphoserine modification is found at Ser-141. The Ras-associating domain maps to 174–262; sequence YNHKTSVFTP…ARIFLMEADL (89 aa). The SARAH domain occupies 270–317; the sequence is VAQYIKFEMPVLDSFVEKLKEEEEREIIKLTMKFQALRLTMLQRLEQL.

Interacts directly with activated KRAS in a GTP-dependent manner. In terms of tissue distribution, widely expressed. Frequently down-regulated in tumor cell lines.

In terms of biological role, potential tumor suppressor. May act as a KRAS effector protein. May promote apoptosis and cell cycle arrest. The sequence is that of Ras association domain-containing protein 4 (RASSF4) from Homo sapiens (Human).